A 227-amino-acid polypeptide reads, in one-letter code: Cytochrome c oxidase subunit 2 (227 aa).

Over 1–14 (MAYPMQLGFQDATS) the chain is Mitochondrial intermembrane. Residues 15–45 (PIMEELLHFHDHTLMIVFLISSLVLYVISLM) form a helical membrane-spanning segment. The Mitochondrial matrix segment spans residues 46-59 (LTTKLTHTSTMDAQ). The helical transmembrane segment at 60–87 (EVETIWTILPAIILILIALPSLRILYMM) threads the bilayer. Residues 88–227 (DEINNPSLTV…YFEKWSASML (140 aa)) lie on the Mitochondrial intermembrane side of the membrane. Residues H161, C196, E198, C200, H204, and M207 each coordinate Cu cation. E198 contacts Mg(2+).

It belongs to the cytochrome c oxidase subunit 2 family. Component of the cytochrome c oxidase (complex IV, CIV), a multisubunit enzyme composed of 14 subunits. The complex is composed of a catalytic core of 3 subunits MT-CO1, MT-CO2 and MT-CO3, encoded in the mitochondrial DNA, and 11 supernumerary subunits COX4I, COX5A, COX5B, COX6A, COX6B, COX6C, COX7A, COX7B, COX7C, COX8 and NDUFA4, which are encoded in the nuclear genome. The complex exists as a monomer or a dimer and forms supercomplexes (SCs) in the inner mitochondrial membrane with NADH-ubiquinone oxidoreductase (complex I, CI) and ubiquinol-cytochrome c oxidoreductase (cytochrome b-c1 complex, complex III, CIII), resulting in different assemblies (supercomplex SCI(1)III(2)IV(1) and megacomplex MCI(2)III(2)IV(2)). Found in a complex with TMEM177, COA6, COX18, COX20, SCO1 and SCO2. Interacts with TMEM177 in a COX20-dependent manner. Interacts with COX20. Interacts with COX16. Requires Cu cation as cofactor.

It is found in the mitochondrion inner membrane. The enzyme catalyses 4 Fe(II)-[cytochrome c] + O2 + 8 H(+)(in) = 4 Fe(III)-[cytochrome c] + 2 H2O + 4 H(+)(out). Its function is as follows. Component of the cytochrome c oxidase, the last enzyme in the mitochondrial electron transport chain which drives oxidative phosphorylation. The respiratory chain contains 3 multisubunit complexes succinate dehydrogenase (complex II, CII), ubiquinol-cytochrome c oxidoreductase (cytochrome b-c1 complex, complex III, CIII) and cytochrome c oxidase (complex IV, CIV), that cooperate to transfer electrons derived from NADH and succinate to molecular oxygen, creating an electrochemical gradient over the inner membrane that drives transmembrane transport and the ATP synthase. Cytochrome c oxidase is the component of the respiratory chain that catalyzes the reduction of oxygen to water. Electrons originating from reduced cytochrome c in the intermembrane space (IMS) are transferred via the dinuclear copper A center (CU(A)) of subunit 2 and heme A of subunit 1 to the active site in subunit 1, a binuclear center (BNC) formed by heme A3 and copper B (CU(B)). The BNC reduces molecular oxygen to 2 water molecules using 4 electrons from cytochrome c in the IMS and 4 protons from the mitochondrial matrix. This Gazella spekei (Speke's gazelle) protein is Cytochrome c oxidase subunit 2 (MT-CO2).